Here is a 201-residue protein sequence, read N- to C-terminus: Peptidyl-tRNA hydrolase (201 aa).

TRNA is bound at residue tyrosine 15. Histidine 20 (proton acceptor) is an active-site residue. TRNA is bound by residues tyrosine 66, asparagine 68, and asparagine 114.

Belongs to the PTH family. In terms of assembly, monomer.

It is found in the cytoplasm. The enzyme catalyses an N-acyl-L-alpha-aminoacyl-tRNA + H2O = an N-acyl-L-amino acid + a tRNA + H(+). Hydrolyzes ribosome-free peptidyl-tRNAs (with 1 or more amino acids incorporated), which drop off the ribosome during protein synthesis, or as a result of ribosome stalling. Functionally, catalyzes the release of premature peptidyl moieties from peptidyl-tRNA molecules trapped in stalled 50S ribosomal subunits, and thus maintains levels of free tRNAs and 50S ribosomes. The polypeptide is Peptidyl-tRNA hydrolase (Burkholderia mallei (strain ATCC 23344)).